A 506-amino-acid chain; its full sequence is Ribose import ATP-binding protein RbsA (506 aa).

ABC transporter domains lie at 5–237 (VQLI…VGRP) and 249–492 (PFGA…LAIE). 37–44 (GENGAGKS) contacts ATP.

The protein belongs to the ABC transporter superfamily. Ribose importer (TC 3.A.1.2.1) family. As to quaternary structure, the complex is composed of an ATP-binding protein (RbsA), two transmembrane proteins (RbsC) and a solute-binding protein (RbsB).

Its subcellular location is the cell inner membrane. The catalysed reaction is D-ribose(out) + ATP + H2O = D-ribose(in) + ADP + phosphate + H(+). Its function is as follows. Part of the ABC transporter complex RbsABC involved in ribose import. Responsible for energy coupling to the transport system. This is Ribose import ATP-binding protein RbsA from Chelativorans sp. (strain BNC1).